Consider the following 296-residue polypeptide: Transposase for insertion sequence element IST2 (296 aa).

The protein belongs to the transposase mutator family.

Functionally, required for the transposition of the insertion element. The protein is Transposase for insertion sequence element IST2 of Acidithiobacillus ferrooxidans (Thiobacillus ferrooxidans).